Here is a 394-residue protein sequence, read N- to C-terminus: Chaperone protein DnaJ (394 aa).

A J domain is found at 4–68 (DYYEILGVSR…ELRARYDRFG (65 aa)). The segment at 136 to 218 (GGEKQIRISH…CNGEGLAQTT (83 aa)) adopts a CR-type zinc-finger fold. C149, C152, C166, C169, C192, C195, C206, and C209 together coordinate Zn(2+). 4 CXXCXGXG motif repeats span residues 149-156 (CPVCGGSG), 166-173 (CPTCGGAG), 192-199 (CPTCGGAG), and 206-213 (CYNCNGEG).

The protein belongs to the DnaJ family. As to quaternary structure, homodimer. Requires Zn(2+) as cofactor.

Its subcellular location is the cytoplasm. Functionally, participates actively in the response to hyperosmotic and heat shock by preventing the aggregation of stress-denatured proteins and by disaggregating proteins, also in an autonomous, DnaK-independent fashion. Unfolded proteins bind initially to DnaJ; upon interaction with the DnaJ-bound protein, DnaK hydrolyzes its bound ATP, resulting in the formation of a stable complex. GrpE releases ADP from DnaK; ATP binding to DnaK triggers the release of the substrate protein, thus completing the reaction cycle. Several rounds of ATP-dependent interactions between DnaJ, DnaK and GrpE are required for fully efficient folding. Also involved, together with DnaK and GrpE, in the DNA replication of plasmids through activation of initiation proteins. In Synechococcus sp. (strain JA-3-3Ab) (Cyanobacteria bacterium Yellowstone A-Prime), this protein is Chaperone protein DnaJ.